Here is a 497-residue protein sequence, read N- to C-terminus: Transmembrane protein 200A (497 aa).

Residues 1–61 (MIATGGVITG…RGKIRLYSAS (61 aa)) lie on the Cytoplasmic side of the membrane. Residues 20–30 (TRSQYHLSAQS) are compositionally biased toward polar residues. The disordered stretch occupies residues 20–44 (TRSQYHLSAQSPGPAPEKKTTKRKP). The chain crosses the membrane as a helical span at residues 62-82 (GFFLVLGVLILMAGIAMAVLG). The Extracellular portion of the chain corresponds to 83 to 127 (YWPHKDQPKAPETKMSANNTQSFGREQAGSIAQFLEQHMHSEKMK). N-linked (GlcNAc...) asparagine glycosylation is present at Asn100. A helical transmembrane segment spans residues 128–148 (MLGPFTMGIGIFIFICANAIL). The Cytoplasmic segment spans residues 149 to 497 (HENRDRETKV…LKRGTSETRF (349 aa)). Low complexity predominate over residues 353–375 (SNSATESASSTSSRSSLSPGSTS). Disordered regions lie at residues 353-385 (SNSATESASSTSSRSSLSPGSTSGRFLSPGAAR) and 400-438 (HSKSLDLERGPTKLTVQPEQRKHPSWPRLDRSNSKGYTR). Over residues 427–438 (RLDRSNSKGYTR) the composition is skewed to basic and acidic residues.

This sequence belongs to the TMEM200 family.

It is found in the membrane. This Danio rerio (Zebrafish) protein is Transmembrane protein 200A (tmem200a).